A 77-amino-acid chain; its full sequence is uncharacterized protein (77 aa).

Its subcellular location is the plastid. The protein localises to the cyanelle. This is an uncharacterized protein from Cyanophora paradoxa.